The chain runs to 257 residues: MEPLIIKLGGVLLDNEKALTRFFTALQEYRTSHSRPLVIVHGGGCLVDSLMKKLQLPVVKKQGLRVTPADQIDIITGALAGSANKTLLSWATRFGLNGVGLCLGDGQLAKVTKISDELGHVGNAEPGSPELLNLLLNAGYLPIISSIGVSIQGELMNVNADQAATAIAETLGADLVLLSDVSGILDGKGQKLTEISATKAQALIDQGIITDGMIVKVNAALEAARTLRRPVEIASWRHAEKLTDLFNGMVIGTRILA.

Residues 43 to 44, R65, and N157 each bind substrate; that span reads GG. ATP contacts are provided by residues 180–185 and 208–210; these read DVSGIL and IIT.

It belongs to the acetylglutamate kinase family. ArgB subfamily. Homodimer.

The protein resides in the cytoplasm. It carries out the reaction N-acetyl-L-glutamate + ATP = N-acetyl-L-glutamyl 5-phosphate + ADP. It functions in the pathway amino-acid biosynthesis; L-arginine biosynthesis; N(2)-acetyl-L-ornithine from L-glutamate: step 2/4. In terms of biological role, catalyzes the ATP-dependent phosphorylation of N-acetyl-L-glutamate. The sequence is that of Acetylglutamate kinase from Proteus mirabilis (strain HI4320).